A 229-amino-acid chain; its full sequence is DNA repair protein RecO (229 aa).

This sequence belongs to the RecO family.

Involved in DNA repair and RecF pathway recombination. The polypeptide is DNA repair protein RecO (Legionella pneumophila (strain Lens)).